We begin with the raw amino-acid sequence, 83 residues long: NAD(P)H-quinone oxidoreductase subunit L (83 aa).

Helical transmembrane passes span leucine 15–alanine 35 and leucine 53–isoleucine 73.

This sequence belongs to the complex I NdhL subunit family. As to quaternary structure, NDH-1 can be composed of about 15 different subunits; different subcomplexes with different compositions have been identified which probably have different functions.

The protein localises to the cellular thylakoid membrane. The enzyme catalyses a plastoquinone + NADH + (n+1) H(+)(in) = a plastoquinol + NAD(+) + n H(+)(out). It catalyses the reaction a plastoquinone + NADPH + (n+1) H(+)(in) = a plastoquinol + NADP(+) + n H(+)(out). NDH-1 shuttles electrons from an unknown electron donor, via FMN and iron-sulfur (Fe-S) centers, to quinones in the respiratory and/or the photosynthetic chain. The immediate electron acceptor for the enzyme in this species is believed to be plastoquinone. Couples the redox reaction to proton translocation, and thus conserves the redox energy in a proton gradient. Cyanobacterial NDH-1 also plays a role in inorganic carbon-concentration. This is NAD(P)H-quinone oxidoreductase subunit L from Synechococcus sp. (strain CC9902).